A 297-amino-acid polypeptide reads, in one-letter code: Ribosomal protein L11 methyltransferase (297 aa).

S-adenosyl-L-methionine contacts are provided by T152, G173, D195, and N234.

It belongs to the methyltransferase superfamily. PrmA family.

The protein localises to the cytoplasm. It carries out the reaction L-lysyl-[protein] + 3 S-adenosyl-L-methionine = N(6),N(6),N(6)-trimethyl-L-lysyl-[protein] + 3 S-adenosyl-L-homocysteine + 3 H(+). Its function is as follows. Methylates ribosomal protein L11. This chain is Ribosomal protein L11 methyltransferase, found in Cupriavidus pinatubonensis (strain JMP 134 / LMG 1197) (Cupriavidus necator (strain JMP 134)).